Consider the following 265-residue polypeptide: Apolipoprotein A-I (265 aa).

An N-terminal signal peptide occupies residues 1 to 18 (MKAVLLTLAVLFLTGSQA). Repeat copies occupy residues 67-88 (LKLL…EQLG) and 89-110 (PVTQ…QEMN). The 10 X approximate tandem repeats stretch occupies residues 67 to 265 (LKLLDNWDSL…DEASKKLNAQ (199 aa)). At M109 the chain carries Methionine sulfoxide. One copy of the 3; half-length repeat lies at 111 to 121 (KDLEEVKQKVQ). 5 tandem repeats follow at residues 122 to 142 (PYLD…RQKV), 144 to 165 (PLGE…DKLT), 166 to 187 (PLAE…QQLA), 188 to 209 (PYSD…AGGG), and 210 to 230 (SLAE…EKAK). One copy of the 9; half-length repeat lies at 231–241 (PALEDLRQGLV). Residues 242-265 (PVLESLKVSILAAIDEASKKLNAQ) form repeat 10.

It belongs to the apolipoprotein A1/A4/E family. In terms of assembly, homodimer. Interacts with APOA1BP and CLU. Component of a sperm activating protein complex (SPAP), consisting of APOA1, an immunoglobulin heavy chain, an immunoglobulin light chain and albumin. Interacts with NDRG1. Interacts with SCGB3A2. Interacts with NAXE and YJEFN3. Post-translationally, glycosylated. In terms of processing, palmitoylated. Phosphorylation sites are present in the extracellular medium. Major protein of plasma HDL, also found in chylomicrons.

The protein localises to the secreted. Functionally, participates in the reverse transport of cholesterol from tissues to the liver for excretion by promoting cholesterol efflux from tissues and by acting as a cofactor for the lecithin cholesterol acyltransferase (LCAT). As part of the SPAP complex, activates spermatozoa motility. The polypeptide is Apolipoprotein A-I (APOA1) (Tursiops truncatus (Atlantic bottle-nosed dolphin)).